The primary structure comprises 171 residues: UPF0398 protein MGAS9429_Spy1349 (171 aa).

It belongs to the UPF0398 family.

The chain is UPF0398 protein MGAS9429_Spy1349 from Streptococcus pyogenes serotype M12 (strain MGAS9429).